The sequence spans 64 residues: Bowman-Birk type trypsin inhibitor TI1 (64 aa).

Intrachain disulfides connect C9–C61, C10–C25, C15–C23, C32–C39, and C36–C49.

The protein belongs to the Bowman-Birk serine protease inhibitor family.

This chain is Bowman-Birk type trypsin inhibitor TI1, found in Coix lacryma-jobi (Job's tears).